The chain runs to 157 residues: 2-C-methyl-D-erythritol 2,4-cyclodiphosphate synthase (157 aa).

A divalent metal cation-binding residues include aspartate 8 and histidine 10. 4-CDP-2-C-methyl-D-erythritol 2-phosphate contacts are provided by residues 8 to 10 (DVH) and 34 to 35 (HS). Residue histidine 42 coordinates a divalent metal cation. Residues 56–58 (DIG), 61–65 (FPDTD), 100–106 (AQAPKMA), 132–135 (TTTE), phenylalanine 139, and arginine 142 each bind 4-CDP-2-C-methyl-D-erythritol 2-phosphate.

The protein belongs to the IspF family. As to quaternary structure, homotrimer. The cofactor is a divalent metal cation.

It catalyses the reaction 4-CDP-2-C-methyl-D-erythritol 2-phosphate = 2-C-methyl-D-erythritol 2,4-cyclic diphosphate + CMP. It participates in isoprenoid biosynthesis; isopentenyl diphosphate biosynthesis via DXP pathway; isopentenyl diphosphate from 1-deoxy-D-xylulose 5-phosphate: step 4/6. Involved in the biosynthesis of isopentenyl diphosphate (IPP) and dimethylallyl diphosphate (DMAPP), two major building blocks of isoprenoid compounds. Catalyzes the conversion of 4-diphosphocytidyl-2-C-methyl-D-erythritol 2-phosphate (CDP-ME2P) to 2-C-methyl-D-erythritol 2,4-cyclodiphosphate (ME-CPP) with a corresponding release of cytidine 5-monophosphate (CMP). The protein is 2-C-methyl-D-erythritol 2,4-cyclodiphosphate synthase of Pseudomonas putida (strain ATCC 700007 / DSM 6899 / JCM 31910 / BCRC 17059 / LMG 24140 / F1).